The sequence spans 564 residues: Kelch repeat and BTB domain-containing protein 1 (564 aa).

One can recognise a BTB domain in the interval 21–88 (CDIDIVINDE…IYGIPLSLTN (68 aa)). One can recognise a BACK domain in the interval 123–219 (CIDFYIYADK…SLLSPQVIKS (97 aa)). 6 Kelch repeats span residues 252-297 (IELI…VLDN), 298-346 (IIYM…ADDE), 347-395 (YIYC…MLNG), 397-441 (IYVI…VHAG), 442-492 (KIYI…SVHN), and 494-539 (LYVG…CEPI).

Interacts (via BTB domain) with host CUL3.

It is found in the host cytoplasm. Functionally, probable substrate-specific adapter of CUL3-containing E3 ubiquitin-protein ligases which mediate the ubiquitination and subsequent proteasomal degradation of host target proteins. The sequence is that of Kelch repeat and BTB domain-containing protein 1 (KBTB1) from Camelus.